A 246-amino-acid chain; its full sequence is Myogenic factor 5 (246 aa).

The disordered stretch occupies residues 1 to 38 (RVRARIPGLSSPEGEFPEDFEPRELPPFGAPAPTEPAC). The bHLH domain maps to 73–124 (DRRKAATMRERRRLKKVNQAFETLKRCTTANPNQRLPKVEILRNAIRYIESL). Residues 210-246 (EEPGLPLRHAGSLSPGASIDSGARTPGSPPPRTYQAL) are disordered. A compositionally biased stretch (pro residues) spans 236–246 (GSPPPRTYQAL).

Efficient DNA binding requires dimerization with another bHLH protein.

Its subcellular location is the nucleus. Functionally, acts as a transcriptional activator that promotes transcription of muscle-specific target genes and plays a role in muscle differentiation. Induces fibroblasts to differentiate into myoblasts. Probable sequence specific DNA-binding protein. In Coturnix japonica (Japanese quail), this protein is Myogenic factor 5 (MYF5).